A 484-amino-acid chain; its full sequence is AMP nucleosidase (484 aa).

This sequence belongs to the AMP nucleosidase family.

The catalysed reaction is AMP + H2O = adenine + D-ribose 5-phosphate. Functionally, catalyzes the hydrolysis of the N-glycosidic bond of AMP to form adenine and ribose 5-phosphate. Involved in regulation of AMP concentrations. The chain is AMP nucleosidase from Escherichia coli O157:H7.